Consider the following 307-residue polypeptide: MEQVRNYYQILGVPRNATAEEIKKSFRKLARQYHPDVNPNDKTAEEKFKDINEAYDVLSDETKRRELDSRLFGRFRRPPTSRFSPNSNGGRSPNGTSVNGQVRTPTGRTGTRQPAQSWQDFSETRRTKVVSPARPVPRDVEANLTLPLEKAYRGGKERIRLEDGRSLEVEMPGGMGDGQRIRLKQQGINGGDLYLKINLSPHPLFTLQGTDIACQVPVTPSEAILGGAIEVMTIDGLVKMTVPAGLKNGQKLRLAKKGFPNNQGDRGDQLVEIRVEIPPEPSPEELELYRRIREKETFNPRQKFFDF.

The J domain maps to 6–71 (NYYQILGVPR…TKRRELDSRL (66 aa)). Residues 69 to 133 (SRLFGRFRRP…TRRTKVVSPA (65 aa)) form a disordered region. Polar residues predominate over residues 88–99 (NGGRSPNGTSVN). The span at 100–114 (GQVRTPTGRTGTRQP) shows a compositional bias: low complexity.

This sequence belongs to the DnaJ family. In terms of assembly, homodimer. The cofactor is Zn(2+).

It localises to the cytoplasm. Participates actively in the response to hyperosmotic and heat shock by preventing the aggregation of stress-denatured proteins and by disaggregating proteins, also in an autonomous, DnaK-independent fashion. Unfolded proteins bind initially to DnaJ; upon interaction with the DnaJ-bound protein, DnaK hydrolyzes its bound ATP, resulting in the formation of a stable complex. GrpE releases ADP from DnaK; ATP binding to DnaK triggers the release of the substrate protein, thus completing the reaction cycle. Several rounds of ATP-dependent interactions between DnaJ, DnaK and GrpE are required for fully efficient folding. Also involved, together with DnaK and GrpE, in the DNA replication of plasmids through activation of initiation proteins. The chain is Chaperone protein DnaJ 2 (dnaJ2) from Synechocystis sp. (strain ATCC 27184 / PCC 6803 / Kazusa).